A 300-amino-acid chain; its full sequence is N-acetylmuramic acid 6-phosphate etherase 1 (300 aa).

Residues 59 to 222 (AAERFKKGGR…STGIMVKVGN (164 aa)) enclose the SIS domain. The Proton donor role is filled by Glu-87. Glu-118 is a catalytic residue.

It belongs to the GCKR-like family. MurNAc-6-P etherase subfamily. Homodimer.

It catalyses the reaction N-acetyl-D-muramate 6-phosphate + H2O = N-acetyl-D-glucosamine 6-phosphate + (R)-lactate. Its pathway is amino-sugar metabolism; N-acetylmuramate degradation. Its function is as follows. Specifically catalyzes the cleavage of the D-lactyl ether substituent of MurNAc 6-phosphate, producing GlcNAc 6-phosphate and D-lactate. The polypeptide is N-acetylmuramic acid 6-phosphate etherase 1 (Enterococcus faecalis (strain ATCC 700802 / V583)).